The following is a 245-amino-acid chain: MPHQLWFTAFLNQYLAGPVSAMMSVLHVPNPHPRAPISNYVAMEILVFLLLVLFFIATRISLSWDKPGVLQHIAEGMNNFVSNQGEEMIGHGYETYTSYIVTLGVFILSMNLIGLIPGFEAPTAFPSVPLGCALVTWFFYHVHGLRENGVIGYLKHFLGPVWWISPLLFVIEICSHFARIMSLTIRLYANMFAGDMVTLAFFSLVPLGFPVVFMGLHIFVSLIQTYIFITLAAVYLAEATAHGHD.

A run of 7 helical transmembrane segments spans residues 5 to 25 (LWFT…MMSV), 37 to 57 (ISNY…FFIA), 99 to 119 (YIVT…IPGF), 125 to 145 (FPSV…VHGL), 157 to 177 (FLGP…CSHF), 187 to 209 (LYAN…PLGF), and 221 to 241 (SLIQ…EATA).

The protein belongs to the ATPase A chain family. F-type ATPases have 2 components, CF(1) - the catalytic core - and CF(0) - the membrane proton channel. CF(1) has five subunits: alpha(3), beta(3), gamma(1), delta(1), epsilon(1). CF(0) has three main subunits: a(1), b(2) and c(9-12). The alpha and beta chains form an alternating ring which encloses part of the gamma chain. CF(1) is attached to CF(0) by a central stalk formed by the gamma and epsilon chains, while a peripheral stalk is formed by the delta and b chains.

Its subcellular location is the cell inner membrane. Functionally, key component of the proton channel; it plays a direct role in the translocation of protons across the membrane. This is ATP synthase subunit a from Koribacter versatilis (strain Ellin345).